The primary structure comprises 392 residues: Phosphoprotein (392 aa).

Disordered regions lie at residues 61 to 107 and 152 to 182; these read ESTN…GLDS and PIATSSPIDFKRGAGIPAGSIEGSTQSDGWE. Residues 217-280 form a multimerization region; it reads LNVNEILNTV…ITTVKIMDPG (64 aa). Positions 219–246 form a coiled coil; the sequence is VNEILNTVRNLDSRMNQLETKVDRILSS.

Belongs to the rubulavirus/avulavirus P protein family. In terms of assembly, homotetramer. Interacts (via multimerization domain) with polymerase L; this interaction forms the polymerase L-P complex. Interacts (via N-terminus) with N0 (via Ncore); this interaction allows P to chaperon N0 to avoid N polymerization before encapsidation. Interacts (via C-terminus) with N-RNA template; this interaction positions the polymerase on the template for both transcription and replication.

Its function is as follows. Essential cofactor of the RNA polymerase L that plays a central role in the transcription and replication by forming the polymerase complex with RNA polymerase L and recruiting L to the genomic N-RNA template for RNA synthesis. Also plays a central role in the encapsidation of nascent RNA chains by forming the encapsidation complex with the nucleocapsid protein N (N-P complex). Acts as a chaperone for newly synthesized free N protein, so-called N0, allowing encapsidation of nascent RNA chains during replication. The nucleoprotein protein N prevents excessive phosphorylation of P, which leads to down-regulation of viral transcription/ replication. Participates, together with N, in the formation of viral factories (viroplasms), which are large inclusions in the host cytoplasm where replication takes place. This Canis lupus familiaris (Dog) protein is Phosphoprotein (P/V).